An 814-amino-acid polypeptide reads, in one-letter code: Plakophilin-2 (814 aa).

Positions 1 to 329 (MAIPGSLGEC…MTLERAVNML (329 aa)) are required for binding to single-stranded DNA. Position 44 is a phosphoserine (Ser44). Residue Arg46 is modified to Omega-N-methylarginine. 2 positions are modified to phosphoserine: Ser82 and Ser130. ARM repeat units follow at residues 200-240 (TCQH…SIKG), 309-352 (CDCL…ESFQ), 354-393 (SEAR…NLVF), 503-549 (PDGR…NLSY), 604-644 (PRGI…NLTA), 652-691 (SVAR…NLSR), 696-737 (QNEI…NLMQ), and 740-782 (YQNA…SLWA).

It belongs to the beta-catenin family. As to quaternary structure, interacts with DSC2. Interacts with JUP. Interacts with KRT5/CK5, KRT8/CK8, KRT14/CK14, KRT18/CK18 and VIM. Interacts (via N-terminus) with MARK3/C-TAK1. Interacts with DSP. Interacts with DSG1, DSG2 and DSG3. Interacts (via N-terminus) with CTNNB1. Interacts with CDH1. Interacts with the RNA polymerase III (Pol III) complex proteins POLR3A/RPC155, POLR3F/RPC39 and POLR3C/RPC82. Interacts with CTNNA3. Interacts (via N-terminus) with SCN5A/Nav1.5. Interacts with ANK3/ANKG and GJA1/CX43. In terms of tissue distribution, expressed in the heart (at protein level).

The protein localises to the nucleus. The protein resides in the cell junction. It is found in the desmosome. It localises to the cytoplasm. A component of desmosome cell-cell junctions which are required for positive regulation of cellular adhesion. Regulates focal adhesion turnover resulting in changes in focal adhesion size, cell adhesion and cell spreading, potentially via transcriptional modulation of beta-integrins. Required to maintain gingival epithelial barrier function. Important component of the desmosome that is also required for localization of desmosome component proteins such as DSC2, DSG2 and JUP to the desmosome cell-cell junction. Required for the formation of desmosome cell junctions in cardiomyocytes, thereby required for the correct formation of the heart, specifically trabeculation and formation of the atria walls. Loss of desmosome cell junctions leads to mis-localization of DSP and DSG2 resulting in disruption of cell-cell adhesion and disordered intermediate filaments. Modulates profibrotic gene expression in cardiomyocytes via regulation of DSP expression and subsequent activation of downstream TGFB1 and MAPK14/p38 MAPK signaling. Required for cardiac sodium current propagation and electrical synchrony in cardiac myocytes, via ANK3 stabilization and modulation of SCN5A/Nav1.5 localization to cell-cell junctions. Required for mitochondrial function, nuclear envelope integrity and positive regulation of SIRT3 transcription via maintaining DES localization at its nuclear envelope and cell tip anchoring points, and thereby preserving regulation of the transcriptional program. Maintenance of nuclear envelope integrity protects against DNA damage and transcriptional dysregulation of genes, especially those involved in the electron transport chain, thereby preserving mitochondrial function and protecting against superoxide radical anion generation. Binds single-stranded DNA (ssDNA). May regulate the localization of GJA1 to gap junctions in intercalated disks of the heart. The sequence is that of Plakophilin-2 from Rattus norvegicus (Rat).